We begin with the raw amino-acid sequence, 517 residues long: MQVTTRFISAIVSFCLFASFTLAENSARATPGSDLLVLTEKKFKSFIESHPLVLVEFFAPWCLHSQILRPHLEEAASILKEHNVPVVQIDCEANSMVCLQQTINTYPTLKIFKNGRIFDGQVYRGVKITDEITQYMIQLYEASVIYLNSEDEIQPYLENATLPVVINRGLTGLNETYQEVALDLAEDYVFLSLLDSEDKSLSIHLPNTTEPILFDGNVDSLVGNSVALTQWLKVVILPYFTDIEPDLFPKYISSNLPLAYFFYTSEEELEDYTDLFTQLGKENRGQINFIALNSTMFPHHVRFLNMREQFPLFAIHNMINNLKYGLPQLPEEEYAKLEKPQPLDRDMIVQLVKDYREGTAKPIVKSEEIPKEQKSNVYKIVGKTHDDIVHDDDKDVLVKYYATWCIHSKRFAPIYEEIANVLASDESVRDKILIAEVDSGANDILSFPVTGYPTIALYPAGNNSKPIIFNKIRNLEDVFEFIKESGTHHIDGQAIYDKLHQAKDSEVSTEDTVHDEL.

An N-terminal signal peptide occupies residues Met1–Ala29. A Thioredoxin 1 domain is found at Thr30 to Glu141. N-linked (GlcNAc...) asparagine glycosylation is found at Asn159, Asn174, Asn207, Asn293, and Asn462. One can recognise a Thioredoxin 2 domain in the interval Tyr355 to Thr487. A Prevents secretion from ER motif is present at residues His514–Leu517.

It belongs to the protein disulfide isomerase family. In terms of assembly, interacts with EPS1. In terms of processing, may have O-linked mannose residues.

It is found in the endoplasmic reticulum lumen. It catalyses the reaction Catalyzes the rearrangement of -S-S- bonds in proteins.. Its function is as follows. Probably interacts with nascent polypeptides in the endoplasmic reticulum. It is an essential gene only in the absence of PDI. Its native disulfide isomerase activity is very low. The polypeptide is Protein disulfide-isomerase EUG1 (EUG1) (Saccharomyces cerevisiae (strain ATCC 204508 / S288c) (Baker's yeast)).